A 122-amino-acid chain; its full sequence is Large ribosomal subunit protein uL14 (122 aa).

The protein belongs to the universal ribosomal protein uL14 family. As to quaternary structure, part of the 50S ribosomal subunit. Forms a cluster with proteins L3 and L19. In the 70S ribosome, L14 and L19 interact and together make contacts with the 16S rRNA in bridges B5 and B8.

In terms of biological role, binds to 23S rRNA. Forms part of two intersubunit bridges in the 70S ribosome. The polypeptide is Large ribosomal subunit protein uL14 (Thermosipho africanus (strain TCF52B)).